A 431-amino-acid polypeptide reads, in one-letter code: Na(+)/H(+) antiporter NhaA 1 (431 aa).

11 helical membrane passes run 17–37 (LSGI…NSNF), 56–76 (FIIS…LFFL), 98–118 (MFPF…YIAL), 123–143 (FIGF…MLIL), 154–174 (LFLV…VATV), 182–202 (EYFL…YFDV), 209–229 (LFLG…ATIA), 301–321 (FSAF…LLDF), 329–349 (MIVL…IFGF), 373–393 (VGFI…LAFI), and 400–420 (AIKI…MILI).

Belongs to the NhaA Na(+)/H(+) (TC 2.A.33) antiporter family.

The protein localises to the cell inner membrane. The catalysed reaction is Na(+)(in) + 2 H(+)(out) = Na(+)(out) + 2 H(+)(in). In terms of biological role, na(+)/H(+) antiporter that extrudes sodium in exchange for external protons. The polypeptide is Na(+)/H(+) antiporter NhaA 1 (Aliarcobacter butzleri (strain RM4018) (Arcobacter butzleri)).